The primary structure comprises 649 residues: Protein WHI4 (649 aa).

2 positions are modified to phosphoserine: serine 22 and serine 206. Disordered stretches follow at residues 196 to 217 and 228 to 247; these read EHVS…SSAQ and ISYG…KPRP. Residues 228 to 238 are compositionally biased toward polar residues; sequence ISYGKTSSSPL. Phosphoserine occurs at positions 258 and 283. Disordered stretches follow at residues 438–461 and 604–649; these read LDLN…SIFN and QLPH…YGKS. An RRM domain is found at 533 to 625; sequence NTLYVGNLPP…GGIRLSFSKN (93 aa). Residues 631–649 are compositionally biased toward polar residues; it reads GSNSRSKSGYSFNGSYGKS.

Post-translationally, phosphorylated by PKA in vitro.

The protein resides in the cytoplasm. Its function is as follows. Has a partially redundant function to WHI3, a dosage-dependent modulator of cell size. This Saccharomyces cerevisiae (strain ATCC 204508 / S288c) (Baker's yeast) protein is Protein WHI4 (WHI4).